A 361-amino-acid polypeptide reads, in one-letter code: DNA replication and repair protein RecF (361 aa).

Position 30 to 37 (30 to 37 (GPNGSGKT)) interacts with ATP.

The protein belongs to the RecF family.

Its subcellular location is the cytoplasm. In terms of biological role, the RecF protein is involved in DNA metabolism; it is required for DNA replication and normal SOS inducibility. RecF binds preferentially to single-stranded, linear DNA. It also seems to bind ATP. The sequence is that of DNA replication and repair protein RecF from Yersinia pseudotuberculosis serotype O:1b (strain IP 31758).